Consider the following 803-residue polypeptide: Exo-1,4-beta-xylosidase xlnD (803 aa).

Positions 1-18 are cleaved as a signal peptide; that stretch reads MRSLISVAVLSALPTAFS. Asn-21, Asn-44, Asn-85, Asn-122, Asn-140, and Asn-234 each carry an N-linked (GlcNAc...) asparagine glycan. Residue Asp-307 is part of the active site. 6 N-linked (GlcNAc...) asparagine glycosylation sites follow: Asn-437, Asn-474, Asn-515, Asn-611, Asn-676, and Asn-698.

This sequence belongs to the glycosyl hydrolase 3 family.

The protein resides in the secreted. The catalysed reaction is Hydrolysis of (1-&gt;4)-beta-D-xylans, to remove successive D-xylose residues from the non-reducing termini.. Its pathway is glycan degradation; xylan degradation. Xylan 1,4-beta-xylosidase involved in the hydrolysis of xylan, a major structural heterogeneous polysaccharide found in plant biomass representing the second most abundant polysaccharide in the biosphere, after cellulose. The polypeptide is Exo-1,4-beta-xylosidase xlnD (xlnD) (Emericella nidulans (strain FGSC A4 / ATCC 38163 / CBS 112.46 / NRRL 194 / M139) (Aspergillus nidulans)).